Reading from the N-terminus, the 650-residue chain is 1-deoxy-D-xylulose-5-phosphate synthase (650 aa).

Thiamine diphosphate contacts are provided by residues His-73 and 113 to 115; that span reads SHA. Residue Asp-145 participates in Mg(2+) binding. Thiamine diphosphate-binding positions include 146–147, Asn-175, Tyr-287, and Glu-369; that span reads GA. Asn-175 contributes to the Mg(2+) binding site. A disordered region spans residues 629–650; that stretch reads SARPLPEDAERVPMRAEDDEQA. The span at 633-644 shows a compositional bias: basic and acidic residues; the sequence is LPEDAERVPMRA.

The protein belongs to the transketolase family. DXPS subfamily. As to quaternary structure, homodimer. Mg(2+) is required as a cofactor. Thiamine diphosphate serves as cofactor.

The enzyme catalyses D-glyceraldehyde 3-phosphate + pyruvate + H(+) = 1-deoxy-D-xylulose 5-phosphate + CO2. It participates in metabolic intermediate biosynthesis; 1-deoxy-D-xylulose 5-phosphate biosynthesis; 1-deoxy-D-xylulose 5-phosphate from D-glyceraldehyde 3-phosphate and pyruvate: step 1/1. Functionally, catalyzes the acyloin condensation reaction between C atoms 2 and 3 of pyruvate and glyceraldehyde 3-phosphate to yield 1-deoxy-D-xylulose-5-phosphate (DXP). The polypeptide is 1-deoxy-D-xylulose-5-phosphate synthase (Clavibacter sepedonicus (Clavibacter michiganensis subsp. sepedonicus)).